Consider the following 172-residue polypeptide: MSLPNPAELIRQMAVDLRAHLARRHISEPRYIGIRTGGVWVAQALQEAMGDTSPMGTLDVSFYRDDFSQNGLHPQVRPSELPFEVEGQHLVLVDDVLMSGRTIRAALNELFDYGRPASVTLVCLLDLDAGELPIRPNVLGATLSLAAHERVKLTGPAPLALERQDLASASAL.

Residues 90–102 carry the PRPP-binding motif; sequence LVLVDDVLMSGRT.

The protein belongs to the purine/pyrimidine phosphoribosyltransferase family. PyrR subfamily.

It catalyses the reaction UMP + diphosphate = 5-phospho-alpha-D-ribose 1-diphosphate + uracil. Regulates the transcription of the pyrimidine nucleotide (pyr) operon in response to exogenous pyrimidines. In terms of biological role, also displays a weak uracil phosphoribosyltransferase activity which is not physiologically significant. This is Bifunctional protein PyrR from Pseudomonas putida (strain GB-1).